Consider the following 712-residue polypeptide: Testis-specific gene 10 protein (712 aa).

The residue at position 161 (Ser-161) is a Phosphoserine. An interaction with HIF1A region spans residues 571–703 (QMTNERISMQ…SPDRDLDRSL (133 aa)). The segment at 673-699 (YHLGSMKPNTKCHSPERAHHRSPDRDL) is disordered. Positions 685–699 (HSPERAHHRSPDRDL) are enriched in basic and acidic residues. Ser-702 carries the phosphoserine modification.

This sequence belongs to the CEP135/TSGA10 family. As to quaternary structure, interacts with HIF1A. In terms of processing, processed into N-terminal 27-kDa and C-terminal 55-kDa fragments. In terms of tissue distribution, expressed in testis, predominantly in elongated spermatids (at protein level). Detected in spermatocytes only at the mRNA, but not at the protein level.

The protein resides in the cytoplasm. It localises to the cytoskeleton. The protein localises to the microtubule organizing center. Its subcellular location is the centrosome. It is found in the centriole. Plays a role in spermatogenesis. When overexpressed, prevents nuclear localization of HIF1A. In Rattus norvegicus (Rat), this protein is Testis-specific gene 10 protein (Tsga10).